A 554-amino-acid polypeptide reads, in one-letter code: Solute carrier family 22 member 2 (554 aa).

Residues 1–21 (MPTVDDILEQVGHFHFFQKQT) are Cytoplasmic-facing. The chain crosses the membrane as a helical span at residues 22 to 42 (FFLLALISAAFTPIYVGIVFL). Over 43–149 (GFTPDHRCRS…LVCARSWMLD (107 aa)) the chain is Extracellular. Residue Asn-71 is glycosylated (N-linked (GlcNAc...) asparagine). The helical transmembrane segment at 150–170 (LFQSAVNIGFFIGSVGIGYLA) threads the bilayer. Residues 171 to 176 (DRFGRK) lie on the Cytoplasmic side of the membrane. The helical transmembrane segment at 177-197 (LCLLVTILINAAAGVLMAVSP) threads the bilayer. Asn-198 is a glycosylation site (N-linked (GlcNAc...) asparagine). Residues 198–209 (NYTWMLIFRLIQ) are Extracellular-facing. Residues 210–230 (GLVSKAGWLIGYILITEFVGL) traverse the membrane as a helical segment. The Cytoplasmic segment spans residues 231–237 (NYRRTVG). The helical transmembrane segment at 238–258 (ILYQVAFTVGLLVLAGVAYAL) threads the bilayer. Over 259–262 (PRWR) the chain is Extracellular. Residues 263-283 (WLQLTVTLPYFCFLLYYWCIP) form a helical membrane-spanning segment. The short motif at 283–287 (PESPR) is the Proline-rich sequence element. Over 284-348 (ESPRWLISQN…RTPQIRKHTC (65 aa)) the chain is Cytoplasmic. A helical transmembrane segment spans residues 349–369 (ILMYNWFTSSVLYQGLIMHLG). Over 370-374 (LAGGD) the chain is Extracellular. Residues 375–395 (IYLDFFYSALVEFPAAFLIIA) form a helical membrane-spanning segment. Topologically, residues 396-403 (TIDRVGRR) are cytoplasmic. The chain crosses the membrane as a helical span at residues 404–424 (YPWAVSNMVAGAACLASVFVP). Residues 425-427 (DDL) are Extracellular-facing. A helical membrane pass occupies residues 428–450 (QGLRITVACLGRMGITMAYEMVC). Residues 451–463 (LVNAELYPTFIRN) lie on the Cytoplasmic side of the membrane. Residues 464 to 484 (LGVLVCSSLCDVGGIVTPFLV) form a helical membrane-spanning segment. Residues 485–493 (YRLTAIWLQ) are Extracellular-facing. A helical transmembrane segment spans residues 494–514 (LPLVVFAVVGLVAGGLVLMLP). Residues 515-554 (ETKGRTLPETIEEAENLQRPRKNREKVIYVHVRKADGPLT) are Cytoplasmic-facing.

The protein belongs to the major facilitator (TC 2.A.1) superfamily. Organic cation transporter (TC 2.A.1.19) family. Post-translationally, tyrosine phosphorylated. In terms of tissue distribution, expressed in kidney.

It is found in the basolateral cell membrane. It localises to the basal cell membrane. It carries out the reaction (R)-noradrenaline(out) = (R)-noradrenaline(in). The catalysed reaction is (R)-adrenaline(out) = (R)-adrenaline(in). It catalyses the reaction serotonin(out) = serotonin(in). The enzyme catalyses dopamine(out) = dopamine(in). It carries out the reaction histamine(out) = histamine(in). The catalysed reaction is thiamine(in) = thiamine(out). It catalyses the reaction creatinine(in) = creatinine(out). The enzyme catalyses 1-methylnicotinamide(out) = 1-methylnicotinamide(in). It carries out the reaction guanidine(out) = guanidine(in). The catalysed reaction is choline(out) = choline(in). It catalyses the reaction agmatine(out) = agmatine(in). The enzyme catalyses putrescine(out) = putrescine(in). It carries out the reaction spermidine(in) = spermidine(out). The catalysed reaction is tyramine(in) = tyramine(out). It catalyses the reaction L-histidyl-L-proline diketopiperazine(in) = L-histidyl-L-proline diketopiperazine(out). The enzyme catalyses (R)-salsolinol(in) = (R)-salsolinol(out). It carries out the reaction N-methyl-(R)-salsolinol(in) = N-methyl-(R)-salsolinol(out). The catalysed reaction is acetylcholine(in) = acetylcholine(out). It catalyses the reaction prostaglandin F2alpha(out) = prostaglandin F2alpha(in). The enzyme catalyses prostaglandin E2(out) = prostaglandin E2(in). With respect to regulation, tyrosine phosphorylation of the transporter leads to activation of the transport activity. Inhibited by cGMP, most likely through a cGMP-binding protein that interacts with OCT2. Its function is as follows. Electrogenic voltage-dependent transporter that mediates the transport of a variety of organic cations such as endogenous bioactive amines, cationic drugs and xenobiotics. Functions as a Na(+)-independent, bidirectional uniporter. Cation cellular uptake or release is driven by the electrochemical potential, i.e. membrane potential and concentration gradient. However, may also engage electroneutral cation exchange when saturating concentrations of cation substrates are reached. Predominantly expressed at the basolateral membrane of hepatocytes and proximal tubules and involved in the uptake and disposition of cationic compounds by hepatic and renal clearance from the blood flow. Implicated in monoamine neurotransmitters uptake such as histamine, dopamine, adrenaline/epinephrine, noradrenaline/norepinephrine, serotonin and tyramine, thereby supporting a physiological role in the central nervous system by regulating interstitial concentrations of neurotransmitters. Also capable of transporting dopaminergic neuromodulators cyclo(his-pro), salsolinol and N-methyl-salsolinol, thereby involved in the maintenance of dopaminergic cell integrity in the central nervous system. Mediates the bidirectional transport of acetylcholine (ACh) at the apical membrane of ciliated cell in airway epithelium, thereby playing a role in luminal release of ACh from bronchial epithelium. Also transports guanidine and endogenous monoamines such as vitamin B1/thiamine, creatinine and N-1-methylnicotinamide (NMN). Mediates the uptake and efflux of quaternary ammonium compound choline. Mediates the bidirectional transport of polyamine agmatine and the uptake of polyamines putrescine and spermidine. Able to transport non-amine endogenous compounds such as prostaglandin E2 (PGE2) and prostaglandin F2-alpha (PGF2-alpha). Also involved in the uptake of xenobiotic 4-(4-(dimethylamino)styryl)-N-methylpyridinium (ASP). May contribute to regulate the transport of organic compounds in testis across the blood-testis-barrier. This is Solute carrier family 22 member 2 (SLC22A2) from Oryctolagus cuniculus (Rabbit).